Here is a 302-residue protein sequence, read N- to C-terminus: Sulfate adenylyltransferase subunit 2 (302 aa).

The protein belongs to the PAPS reductase family. CysD subfamily. In terms of assembly, heterodimer composed of CysD, the smaller subunit, and CysN.

It catalyses the reaction sulfate + ATP + H(+) = adenosine 5'-phosphosulfate + diphosphate. It functions in the pathway sulfur metabolism; hydrogen sulfide biosynthesis; sulfite from sulfate: step 1/3. Its function is as follows. With CysN forms the ATP sulfurylase (ATPS) that catalyzes the adenylation of sulfate producing adenosine 5'-phosphosulfate (APS) and diphosphate, the first enzymatic step in sulfur assimilation pathway. APS synthesis involves the formation of a high-energy phosphoric-sulfuric acid anhydride bond driven by GTP hydrolysis by CysN coupled to ATP hydrolysis by CysD. The chain is Sulfate adenylyltransferase subunit 2 from Photorhabdus laumondii subsp. laumondii (strain DSM 15139 / CIP 105565 / TT01) (Photorhabdus luminescens subsp. laumondii).